The following is a 268-amino-acid chain: Protein atz-1 (268 aa).

Positions 171–243 (VDDANKLTEV…EEGEEDYEEE (73 aa)) form a coiled coil. Positions 229–268 (DLMKEEEGEEDYEEEENYEVEEDFEDEEEYDEEGEEEDYE) are disordered. The segment covering 231 to 268 (MKEEEGEEDYEEEENYEVEEDFEDEEEYDEEGEEEDYE) has biased composition (acidic residues).

It localises to the nucleus. Plays a role in meiosis, germline development and oocyte morphogenesis. May play a role in DNA replication. In the germline, involved in the maintenance of transition zone nuclei and in chromosome structure and organization, but not required for mitotic proliferation. The polypeptide is Protein atz-1 (Caenorhabditis elegans).